The following is a 285-amino-acid chain: Golgi to ER traffic protein 2 (285 aa).

The span at 1–10 shows a compositional bias: basic and acidic residues; that stretch reads MSELTEAEKR. 2 disordered regions span residues 1-72 and 87-106; these read MSEL…KEDS and MQGQ…PDLL. The residue at position 2 (S2) is an N-acetylserine. At 2-148 the chain is on the cytoplasmic side; the sequence is SELTEAEKRR…LDYHDYLLNR (147 aa). Residues 11–20 are compositionally biased toward basic residues; it reads RLLRERRQKK. Positions 24–42 are enriched in polar residues; it reads GGASSRLNKITGQASSHLN. S45 bears the Phosphoserine mark. Low complexity predominate over residues 49–60; sequence APSAAKTTPPAS. Positions 93–104 are enriched in polar residues; that stretch reads GKSTPQDSSTPD. Residues 149–169 traverse the membrane as a helical segment; the sequence is LKAWTILVKWVFFLLPYLYLI. The Lumenal segment spans residues 170–196; it reads TRPNSSVWPAYAFTQSAWFAPLRNPSN. 2 N-linked (GlcNAc...) asparagine glycosylation sites follow: N173 and N196. Residues 197–216 traverse the membrane as a helical segment; that stretch reads FTRIFATFEFLSISIYYQLL. The Cytoplasmic portion of the chain corresponds to 217–263; the sequence is KNVEHKSKIKNLQDTNKLVKLVSLVPEGVIPVANLKGKLITLLQYWD. The helical transmembrane segment at 264 to 284 threads the bilayer; it reads LLSMLITDISFVLIVLGLLTY. L285 is a topological domain (lumenal).

It belongs to the GET2 family. In terms of assembly, component of the Golgi to ER traffic (GET) complex, which is composed of GET1, GET2 and GET3. Within the complex, GET1 and GET2 form a heterotetramer which is stabilized by phosphatidylinositol binding and which binds to the GET3 homodimer.

The protein resides in the endoplasmic reticulum membrane. It localises to the golgi apparatus membrane. Its function is as follows. Required for the post-translational delivery of tail-anchored (TA) proteins to the endoplasmic reticulum. Together with GET1, acts as a membrane receptor for soluble GET3, which recognizes and selectively binds the transmembrane domain of TA proteins in the cytosol. The GET complex cooperates with the HDEL receptor ERD2 to mediate the ATP-dependent retrieval of resident ER proteins that contain a C-terminal H-D-E-L retention signal from the Golgi to the ER. Involved in DNA replication and DNA damage response and also in cell wall function. The sequence is that of Golgi to ER traffic protein 2 from Saccharomyces cerevisiae (strain RM11-1a) (Baker's yeast).